A 449-amino-acid chain; its full sequence is Probable phosphoglucosamine mutase (449 aa).

The active-site Phosphoserine intermediate is Ser96. The Mg(2+) site is built by Ser96, Asp233, Asp235, and Asp237. Ser96 bears the Phosphoserine mark.

This sequence belongs to the phosphohexose mutase family. Mg(2+) serves as cofactor. Post-translationally, activated by phosphorylation.

The enzyme catalyses alpha-D-glucosamine 1-phosphate = D-glucosamine 6-phosphate. In terms of biological role, catalyzes the conversion of glucosamine-6-phosphate to glucosamine-1-phosphate. This Thermococcus gammatolerans (strain DSM 15229 / JCM 11827 / EJ3) protein is Probable phosphoglucosamine mutase.